The chain runs to 220 residues: Thiamine-phosphate synthase (220 aa).

4-amino-2-methyl-5-(diphosphooxymethyl)pyrimidine contacts are provided by residues 47–51 (QYREK) and N78. Mg(2+) contacts are provided by D79 and D98. S117 is a 4-amino-2-methyl-5-(diphosphooxymethyl)pyrimidine binding site. Position 143 to 145 (143 to 145 (TAT)) interacts with 2-[(2R,5Z)-2-carboxy-4-methylthiazol-5(2H)-ylidene]ethyl phosphate. K146 provides a ligand contact to 4-amino-2-methyl-5-(diphosphooxymethyl)pyrimidine. 2-[(2R,5Z)-2-carboxy-4-methylthiazol-5(2H)-ylidene]ethyl phosphate contacts are provided by residues G174 and 194-195 (IS).

This sequence belongs to the thiamine-phosphate synthase family. The cofactor is Mg(2+).

It catalyses the reaction 2-[(2R,5Z)-2-carboxy-4-methylthiazol-5(2H)-ylidene]ethyl phosphate + 4-amino-2-methyl-5-(diphosphooxymethyl)pyrimidine + 2 H(+) = thiamine phosphate + CO2 + diphosphate. It carries out the reaction 2-(2-carboxy-4-methylthiazol-5-yl)ethyl phosphate + 4-amino-2-methyl-5-(diphosphooxymethyl)pyrimidine + 2 H(+) = thiamine phosphate + CO2 + diphosphate. The enzyme catalyses 4-methyl-5-(2-phosphooxyethyl)-thiazole + 4-amino-2-methyl-5-(diphosphooxymethyl)pyrimidine + H(+) = thiamine phosphate + diphosphate. It functions in the pathway cofactor biosynthesis; thiamine diphosphate biosynthesis; thiamine phosphate from 4-amino-2-methyl-5-diphosphomethylpyrimidine and 4-methyl-5-(2-phosphoethyl)-thiazole: step 1/1. Condenses 4-methyl-5-(beta-hydroxyethyl)thiazole monophosphate (THZ-P) and 2-methyl-4-amino-5-hydroxymethyl pyrimidine pyrophosphate (HMP-PP) to form thiamine monophosphate (TMP). The polypeptide is Thiamine-phosphate synthase (Methanosarcina barkeri (strain Fusaro / DSM 804)).